The primary structure comprises 1024 residues: Seizure 6-like protein (1024 aa).

Residues 1 to 28 form the signal peptide; the sequence is MPAARPPAAGLRGISLFLALLLGSPAAA. Residues 29–958 are Extracellular-facing; sequence LERDALPEGD…ETSLEGGNMA (930 aa). 3 disordered regions span residues 33 to 77, 108 to 184, and 212 to 234; these read ALPE…SQSA, RPKH…EVPL, and AHTL…EAPQ. A glycan (O-linked (GalNAc...) serine) is linked at serine 49. The segment covering 56–66 has biased composition (basic and acidic residues); the sequence is SPGKEHPEERV. Basic residues predominate over residues 110–120; that stretch reads KHALPPKKKLP. Positions 138-162 are enriched in polar residues; sequence SAATVQRAGSQPASQGLDLLSSSTE. O-glycosylated at one site regions lie at residues 147–161 and 176–180; these read SQPA…SSST and SEEAS. A disulfide bond links cysteine 281 and cysteine 308. The region spanning 281-389 is the CUB 1 domain; sequence CSVSFSNPEG…GTFQLHYQAF (109 aa). Asparagine 311, asparagine 328, and asparagine 350 each carry an N-linked (GlcNAc...) asparagine glycan. Positions 391–450 constitute a Sushi 1 domain; the sequence is LSCNFPRRPDSGDVTVMDLHSGGVAHFHCHLGYELQGAKMLTCINASKPHWSSQEPICSA. Cystine bridges form between cysteine 393-cysteine 433 and cysteine 419-cysteine 448. 8 N-linked (GlcNAc...) asparagine glycosylation sites follow: asparagine 435, asparagine 458, asparagine 474, asparagine 514, asparagine 576, asparagine 618, asparagine 674, and asparagine 742. The 111-residue stretch at 452 to 562 folds into the CUB 2 domain; it reads CGGAVHNATI…STFNIRFEAF (111 aa). The Sushi 2 domain occupies 565–626; the sequence is GHCYEPYIQN…WNDTEPLCRA (62 aa). 2 disulfides stabilise this stretch: cysteine 567/cysteine 609 and cysteine 594/cysteine 624. The CUB 3 domain maps to 628–739; the sequence is CGGELSAVAG…QGFIMNYIEV (112 aa). Sushi domains lie at 743 to 802, 804 to 867, and 871 to 932; these read DSCS…FCEK, MYCT…HCVS, and LACD…VCKV. Intrachain disulfides connect cysteine 745/cysteine 787, cysteine 773/cysteine 800, cysteine 806/cysteine 848, cysteine 834/cysteine 865, cysteine 873/cysteine 915, and cysteine 901/cysteine 930. The helical transmembrane segment at 959-979 threads the bilayer; it reads LAIFIPVLIISLLLGGAYIYI. Residues 980 to 1024 lie on the Cytoplasmic side of the membrane; it reads TRCRYYSNLRLPLMYSHPYSQITVETEFDNPIYETGETREYEVSI.

This sequence belongs to the SEZ6 family. Post-translationally, O-glycosylated. As to expression, widely expressed, including adult and fetal brains and lungs. Not expressed in all lung cancer cell lines.

It localises to the endoplasmic reticulum membrane. May contribute to specialized endoplasmic reticulum functions in neurons. This is Seizure 6-like protein (SEZ6L) from Homo sapiens (Human).